Consider the following 114-residue polypeptide: Large ribosomal subunit protein bL20c (114 aa).

It belongs to the bacterial ribosomal protein bL20 family.

It is found in the plastid. It localises to the chloroplast. Its function is as follows. Binds directly to 23S ribosomal RNA and is necessary for the in vitro assembly process of the 50S ribosomal subunit. It is not involved in the protein synthesizing functions of that subunit. The polypeptide is Large ribosomal subunit protein bL20c (rpl20) (Guillardia theta (Cryptophyte)).